Consider the following 410-residue polypeptide: Mating-type locus allele B6 protein (410 aa).

Residues 1-110 (MSRDPKLSLS…VNVASPAVEY (110 aa)) form a variable domain between B alleles region. Residues 107–184 (AVEYRNLSED…NARRRSGWSH (78 aa)) constitute a DNA-binding region (homeobox; TALE-type). Positions 111–410 (RNLSEDLPAY…PFFCLSIAFV (300 aa)) are highly conserved between B alleles. 3 disordered regions span residues 202-224 (RAKL…PSDD), 278-335 (TPKP…TPEL), and 373-393 (KARG…QQPD). Residues 205–219 (LSSSNQSTPPSLTSE) are compositionally biased toward polar residues. A Nuclear localization signal motif is present at residues 276-308 (KKTPKPGMPRPVTTVAKRQPARKTKPAAKPKSR). Positions 294–307 (QPARKTKPAAKPKS) are enriched in basic residues. Polar residues predominate over residues 312 to 335 (PRASTTPSIDSTLDSSKLESTPEL). The tract at residues 333–410 (PELSMCSTAD…PFFCLSIAFV (78 aa)) is not essential for B6 function. Basic residues predominate over residues 375-388 (RGNRKVKALPKRAG).

Belongs to the TALE/M-ATYP homeobox family.

It is found in the nucleus. In terms of biological role, the B locus has at least 25 alleles, and any combination of two different B alleles yields a multimeric regulatory protein, that activates genes responsible for the pathogenicity and for the sexual development of the fungus within the corn plant. In Mycosarcoma maydis (Corn smut fungus), this protein is Mating-type locus allele B6 protein.